The following is a 461-amino-acid chain: METLYNGTLSLGGKDQESTGFAWWSGNARLINLSGRLLGAHVAHAGLIVFWAGAMNLFEVAHFVPEKPMYEQGLILLPHLASLGYGVGPGGEVIDTFPYFVSGVLHLISSAVLGFGGVYHSLIGPETLEETFPFFGYTWKDKNKMTSILGFHLIILGFGAWLLVWKAMYFGGVYDTWAPGGGDTRIITNPTTNPAVIFGYLLKSPFGGDGWIVSVDNMEDIIGGHIWIGTLEIFGGIWHIFTQPWAWTRRAFVWSGEAYLSYSLGAIALMGFVACCMGWFNNTAYPSEFYGPTGPEASQSQAFTFLVRDQRLGANVASAQGPTGLGKYLMRSPTGEIIFGGETMRFWDFRGPWLEPLRGPNGLDLNKLKNDIQPWQERRAAEYMTHAPLGSLNSVGGVATEINSVNFVSPRSWLATSHFCLGFFFFVGHLWHAGRARAAAAGFEKGIDRLTEPVLSLKPLD.

A propeptide spanning residues 1 to 2 (ME) is cleaved from the precursor. Threonine 3 carries the post-translational modification N-acetylthreonine. Threonine 3 carries the post-translational modification Phosphothreonine. 5 helical membrane-spanning segments follow: residues 57–81 (LFEV…PHLA), 122–143 (LIGP…KDKN), 166–188 (KAMY…RIIT), 243–263 (QPWA…LSYS), and 279–300 (WFNN…ASQS). Glutamate 355 serves as a coordination point for [CaMn4O5] cluster. A helical transmembrane segment spans residues 435–459 (RARAAAAGFEKGIDRLTEPVLSLKP).

This sequence belongs to the PsbB/PsbC family. PsbC subfamily. In terms of assembly, PSII is composed of 1 copy each of membrane proteins PsbA, PsbB, PsbC, PsbD, PsbE, PsbF, PsbH, PsbI, PsbJ, PsbK, PsbL, PsbM, PsbT, PsbX, PsbY, PsbZ, Psb30/Ycf12, at least 3 peripheral proteins of the oxygen-evolving complex and a large number of cofactors. It forms dimeric complexes. Binds multiple chlorophylls and provides some of the ligands for the Ca-4Mn-5O cluster of the oxygen-evolving complex. It may also provide a ligand for a Cl- that is required for oxygen evolution. PSII binds additional chlorophylls, carotenoids and specific lipids. is required as a cofactor.

It is found in the plastid. It localises to the chloroplast thylakoid membrane. One of the components of the core complex of photosystem II (PSII). It binds chlorophyll and helps catalyze the primary light-induced photochemical processes of PSII. PSII is a light-driven water:plastoquinone oxidoreductase, using light energy to abstract electrons from H(2)O, generating O(2) and a proton gradient subsequently used for ATP formation. The polypeptide is Photosystem II CP43 reaction center protein (Stigeoclonium helveticum (Green alga)).